A 341-amino-acid chain; its full sequence is MAP3K12-binding inhibitory protein 1 (341 aa).

Serine 91 is subject to Phosphoserine. Residues lysine 94, lysine 127, lysine 137, lysine 151, and lysine 233 each participate in a glycyl lysine isopeptide (Lys-Gly) (interchain with G-Cter in SUMO2) cross-link. The interaction with MAP3K12 stretch occupies residues 170–341; sequence AEINENNVRE…EADSMAAHLP (172 aa). Residues 269–283 are leucine-zipper 1; the sequence is IYQRIKKLEDKILEL. Lysine 299 bears the N6-acetyllysine; alternate mark. Lysine 299 participates in a covalent cross-link: Glycyl lysine isopeptide (Lys-Gly) (interchain with G-Cter in SUMO2); alternate. Glycyl lysine isopeptide (Lys-Gly) (interchain with G-Cter in SUMO2) cross-links involve residues lysine 302 and lysine 323. Residues 312–327 are leucine-zipper 2; it reads LAELDEKISALKRALL.

In terms of assembly, component of the ADA2A-containing complex (ATAC), composed of KAT14, KAT2A, TADA2L, TADA3L, ZZ3, MBIP, WDR5, YEATS2, CCDC101 and DR1. In the complex, it probably interacts directly with KAT2A, KAT14 and WDR5.

The protein localises to the nucleus. Its subcellular location is the cytoplasm. Inhibits the MAP3K12 activity to induce the activation of the JNK/SAPK pathway. Component of the ATAC complex, a complex with histone acetyltransferase activity on histones H3 and H4. This chain is MAP3K12-binding inhibitory protein 1 (Mbip), found in Mus musculus (Mouse).